A 129-amino-acid polypeptide reads, in one-letter code: Follitropin subunit beta (129 aa).

The signal sequence occupies residues 1 to 20 (MKTAQFYIFFFCWKAIWCNG). Disulfide bonds link C21–C69, C35–C84, C38–C122, C46–C100, C50–C102, and C105–C112. N-linked (GlcNAc...) asparagine glycosylation is found at N25 and N42.

The protein belongs to the glycoprotein hormones subunit beta family. Heterodimer. The active follitropin is a heterodimer composed of an alpha chain/CGA shared with other hormones and a unique beta chain/FSHB shown here.

It is found in the secreted. In terms of biological role, together with the alpha chain CGA constitutes follitropin, the follicle-stimulating hormone, and provides its biological specificity to the hormone heterodimer. Binds FSHR, a G protein-coupled receptor, on target cells to activate downstream signaling pathways. Follitropin is involved in follicle development and spermatogenesis in reproductive organs. This chain is Follitropin subunit beta (FSHB), found in Monodelphis domestica (Gray short-tailed opossum).